Reading from the N-terminus, the 209-residue chain is Small ribosomal subunit protein uS4 (209 aa).

Residues 98–164 (SRLDNVVYRG…TPFIVARETA (67 aa)) form the S4 RNA-binding domain.

This sequence belongs to the universal ribosomal protein uS4 family. Part of the 30S ribosomal subunit. Contacts protein S5. The interaction surface between S4 and S5 is involved in control of translational fidelity.

Its function is as follows. One of the primary rRNA binding proteins, it binds directly to 16S rRNA where it nucleates assembly of the body of the 30S subunit. Functionally, with S5 and S12 plays an important role in translational accuracy. The protein is Small ribosomal subunit protein uS4 of Frankia casuarinae (strain DSM 45818 / CECT 9043 / HFP020203 / CcI3).